A 108-amino-acid chain; its full sequence is Nucleoid-associated protein BAV0915 (108 aa).

Belongs to the YbaB/EbfC family. In terms of assembly, homodimer.

It is found in the cytoplasm. It localises to the nucleoid. In terms of biological role, binds to DNA and alters its conformation. May be involved in regulation of gene expression, nucleoid organization and DNA protection. The chain is Nucleoid-associated protein BAV0915 from Bordetella avium (strain 197N).